We begin with the raw amino-acid sequence, 498 residues long: MAKYVMALDQGTTSSRCIIFNERGLIVSVAQREFKQIYPKGGWVEHDPMEIWATQFSVATEAMAKANIEASEIASIGITNQRETTIVWDKRTGLPVYNAIVWQCRRTAQICDELKEKGLTETIRNKTGLVLDAYFSGTKIKWILDNVAGAREEAEKGNLIFGTVDTWLIWNLTKGKVHVTDYSNASRTMIYNIHELKWDDELLEALDIPKSMLPEVKPSSYVYGETNSTLFGSSIPIAGVAGDQQAALFGQMCHQEGTAKSTYGTGCFLLMNTGEKAVKSENGLLTTIAFGIDDKVEYALEGSIFIGGAAIQWLRDELRMLKDSPESERYATAVEDTNGVYMVPAFVGLGAPYWDPYARGAIVGLTRGATKEHFIRATLESLAYQTYDVLNAMREDSGIDLKALRVDGGASANDFLMQFQADILGVPVQRPEVIETTALGAAYLAGLAVGYWKDKKDVAQNWAISKTFEPDMIKERREELLEGWHEAVKRSMNWEKSE.

Thr12 contacts ADP. Residues Thr12, Thr13, and Ser14 each coordinate ATP. Residue Thr12 participates in sn-glycerol 3-phosphate binding. Arg16 is a binding site for ADP. Arg82, Glu83, Tyr134, and Asp243 together coordinate sn-glycerol 3-phosphate. Glycerol-binding residues include Arg82, Glu83, Tyr134, Asp243, and Gln244. ADP is bound by residues Thr265 and Gly308. ATP contacts are provided by Thr265, Gly308, Gln312, and Gly409. 2 residues coordinate ADP: Gly409 and Asn413.

The protein belongs to the FGGY kinase family. As to quaternary structure, homotetramer and homodimer (in equilibrium).

It carries out the reaction glycerol + ATP = sn-glycerol 3-phosphate + ADP + H(+). The protein operates within polyol metabolism; glycerol degradation via glycerol kinase pathway; sn-glycerol 3-phosphate from glycerol: step 1/1. Its activity is regulated as follows. Activated by phosphorylation and inhibited by fructose 1,6-bisphosphate (FBP). Its function is as follows. Key enzyme in the regulation of glycerol uptake and metabolism. Catalyzes the phosphorylation of glycerol to yield sn-glycerol 3-phosphate. The sequence is that of Glycerol kinase 1 from Clostridium tetani (strain Massachusetts / E88).